The chain runs to 90 residues: Putative membrane protein insertion efficiency factor (90 aa).

Belongs to the UPF0161 family.

Its subcellular location is the cell inner membrane. In terms of biological role, could be involved in insertion of integral membrane proteins into the membrane. This chain is Putative membrane protein insertion efficiency factor, found in Thermosynechococcus vestitus (strain NIES-2133 / IAM M-273 / BP-1).